The primary structure comprises 118 residues: Ribonuclease P protein component (118 aa).

The protein belongs to the RnpA family. In terms of assembly, consists of a catalytic RNA component (M1 or rnpB) and a protein subunit.

The enzyme catalyses Endonucleolytic cleavage of RNA, removing 5'-extranucleotides from tRNA precursor.. Functionally, RNaseP catalyzes the removal of the 5'-leader sequence from pre-tRNA to produce the mature 5'-terminus. It can also cleave other RNA substrates such as 4.5S RNA. The protein component plays an auxiliary but essential role in vivo by binding to the 5'-leader sequence and broadening the substrate specificity of the ribozyme. The chain is Ribonuclease P protein component from Shewanella putrefaciens (strain CN-32 / ATCC BAA-453).